We begin with the raw amino-acid sequence, 93 residues long: DNA-binding protein HU 1 (93 aa).

It belongs to the bacterial histone-like protein family. In terms of assembly, homodimer.

The protein localises to the cytoplasm. It is found in the nucleoid. Its function is as follows. Histone-like DNA-binding protein which is capable of wrapping DNA to stabilize it, and thus to prevent its denaturation under extreme environmental conditions. In Streptomyces coelicolor (strain ATCC BAA-471 / A3(2) / M145), this protein is DNA-binding protein HU 1 (hup1).